The following is a 394-amino-acid chain: 1-deoxy-D-xylulose 5-phosphate reductoisomerase (394 aa).

NADPH contacts are provided by Thr-28, Gly-29, Ser-30, Ile-31, Asn-57, and Asn-133. Residue Lys-134 participates in 1-deoxy-D-xylulose 5-phosphate binding. Glu-135 lines the NADPH pocket. Asp-157 serves as a coordination point for Mn(2+). 1-deoxy-D-xylulose 5-phosphate contacts are provided by Ser-158, Glu-159, Ser-183, and His-206. Glu-159 provides a ligand contact to Mn(2+). Position 212 (Gly-212) interacts with NADPH. 4 residues coordinate 1-deoxy-D-xylulose 5-phosphate: Ser-219, Asn-224, Lys-225, and Glu-228. Glu-228 contacts Mn(2+).

Belongs to the DXR family. Requires Mg(2+) as cofactor. It depends on Mn(2+) as a cofactor.

It catalyses the reaction 2-C-methyl-D-erythritol 4-phosphate + NADP(+) = 1-deoxy-D-xylulose 5-phosphate + NADPH + H(+). Its pathway is isoprenoid biosynthesis; isopentenyl diphosphate biosynthesis via DXP pathway; isopentenyl diphosphate from 1-deoxy-D-xylulose 5-phosphate: step 1/6. Its function is as follows. Catalyzes the NADPH-dependent rearrangement and reduction of 1-deoxy-D-xylulose-5-phosphate (DXP) to 2-C-methyl-D-erythritol 4-phosphate (MEP). The polypeptide is 1-deoxy-D-xylulose 5-phosphate reductoisomerase (Nocardia farcinica (strain IFM 10152)).